A 230-amino-acid polypeptide reads, in one-letter code: Orotidine 5'-phosphate decarboxylase (230 aa).

Substrate contacts are provided by residues D10, K32, D59 to T68, T119, R180, Q189, G209, and R210. The active-site Proton donor is the K61.

The protein belongs to the OMP decarboxylase family. Type 1 subfamily. In terms of assembly, homodimer.

It carries out the reaction orotidine 5'-phosphate + H(+) = UMP + CO2. It functions in the pathway pyrimidine metabolism; UMP biosynthesis via de novo pathway; UMP from orotate: step 2/2. Catalyzes the decarboxylation of orotidine 5'-monophosphate (OMP) to uridine 5'-monophosphate (UMP). This is Orotidine 5'-phosphate decarboxylase from Haemophilus influenzae (strain PittEE).